Here is an 843-residue protein sequence, read N- to C-terminus: Respiratory burst oxidase homolog protein B (843 aa).

Residues 1 to 10 are compositionally biased toward acidic residues; that stretch reads MREEEMESSS. The segment at 1–27 is disordered; the sequence is MREEEMESSSEGETNKISRCKATGSDN. Over 1–297 the chain is Cytoplasmic; it reads MREEEMESSS…SYFFLENWKR (297 aa). EF-hand-like stretches follow at residues 114–122 and 148–159; these read AVEGKLPKS and RGTTSSSITKTE. 2 consecutive EF-hand domains span residues 171 to 206 and 215 to 250; these read SFDDRLQIFFDMVDKNLDGRITGDEVKEIIALSASA and NVDEYAALIMEELDRDNLGYIELHNLETLLLQVPSQ. Positions 184, 186, 188, 190, and 195 each coordinate Ca(2+). Residue Ser268 is modified to Phosphoserine. A helical membrane pass occupies residues 298-318; it reads IWVLTLWISICITLFTWKFLQ. Residues 319–383 lie on the Extracellular side of the membrane; the sequence is YKRKTVFEVM…FDDNINFHKV (65 aa). Residues 336-495 enclose the Ferric oxidoreductase domain; that stretch reads KGSAETLKFN…LFVIVYVLLI (160 aa). A helical transmembrane segment spans residues 384-404; that stretch reads VAFGIAVGIGLHAISHLACDF. At 405-439 the chain is on the cytoplasmic side; the sequence is PRLLHAKNVEFEPMKKFFGDERPENYGWFMKGTDG. Residues 440-460 form a helical membrane-spanning segment; sequence WTGVTMVVLMLVAYVLAQSWF. The Extracellular segment spans residues 461 to 482; that stretch reads RRNRANLPKSLKRLTGFNAFWY. Residues 483-503 form a helical membrane-spanning segment; sequence SHHLFVIVYVLLIVHGYFVYL. Over 504-511 the chain is Cytoplasmic; it reads SKEWYHKT. A helical transmembrane segment spans residues 512–529; that stretch reads TWMYLAVPVLLYAFERLI. Topologically, residues 530–659 are extracellular; it reads RAFRPGAKAV…PYGAPAQDYR (130 aa). Residues 534-657 enclose the FAD-binding FR-type domain; the sequence is PGAKAVKVLK…DGPYGAPAQD (124 aa). Residues 660–680 form a helical membrane-spanning segment; that stretch reads NYDVLLLVGLGIGATPLISII. At 681 to 843 the chain is on the cytoplasmic side; sequence RDVLNNIKNQ…TKFEFHKENF (163 aa).

This sequence belongs to the RBOH (TC 5.B.1.3) family. In terms of assembly, monomer and homodimer.

The protein resides in the membrane. In terms of biological role, calcium-dependent NADPH oxidase that generates superoxide. The chain is Respiratory burst oxidase homolog protein B (RBOHB) from Arabidopsis thaliana (Mouse-ear cress).